A 429-amino-acid polypeptide reads, in one-letter code: Enolase (429 aa).

A (2R)-2-phosphoglycerate-binding site is contributed by glutamine 163. The active-site Proton donor is the glutamate 205. Mg(2+)-binding residues include aspartate 242, glutamate 286, and aspartate 313. (2R)-2-phosphoglycerate is bound by residues lysine 338, arginine 367, serine 368, and lysine 389. The active-site Proton acceptor is lysine 338.

Belongs to the enolase family. Mg(2+) serves as cofactor.

It localises to the cytoplasm. The protein resides in the secreted. It is found in the cell surface. The enzyme catalyses (2R)-2-phosphoglycerate = phosphoenolpyruvate + H2O. It participates in carbohydrate degradation; glycolysis; pyruvate from D-glyceraldehyde 3-phosphate: step 4/5. In terms of biological role, catalyzes the reversible conversion of 2-phosphoglycerate (2-PG) into phosphoenolpyruvate (PEP). It is essential for the degradation of carbohydrates via glycolysis. In Geobacter metallireducens (strain ATCC 53774 / DSM 7210 / GS-15), this protein is Enolase.